The primary structure comprises 343 residues: Probable dual-specificity RNA methyltransferase RlmN (343 aa).

The active-site Proton acceptor is Glu-91. The Radical SAM core domain maps to 97–326; that stretch reads HPDRITACIS…AEIRREKGSD (230 aa). Cys-104 and Cys-331 are joined by a disulfide. Cys-111, Cys-115, and Cys-118 together coordinate [4Fe-4S] cluster. S-adenosyl-L-methionine-binding positions include 158 to 159, Ser-190, 213 to 215, and Asn-289; these read GE and SLH. Residue Cys-331 is the S-methylcysteine intermediate of the active site.

This sequence belongs to the radical SAM superfamily. RlmN family. [4Fe-4S] cluster is required as a cofactor.

The protein localises to the cytoplasm. The enzyme catalyses adenosine(2503) in 23S rRNA + 2 reduced [2Fe-2S]-[ferredoxin] + 2 S-adenosyl-L-methionine = 2-methyladenosine(2503) in 23S rRNA + 5'-deoxyadenosine + L-methionine + 2 oxidized [2Fe-2S]-[ferredoxin] + S-adenosyl-L-homocysteine. It carries out the reaction adenosine(37) in tRNA + 2 reduced [2Fe-2S]-[ferredoxin] + 2 S-adenosyl-L-methionine = 2-methyladenosine(37) in tRNA + 5'-deoxyadenosine + L-methionine + 2 oxidized [2Fe-2S]-[ferredoxin] + S-adenosyl-L-homocysteine. Functionally, specifically methylates position 2 of adenine 2503 in 23S rRNA and position 2 of adenine 37 in tRNAs. This chain is Probable dual-specificity RNA methyltransferase RlmN, found in Thermotoga sp. (strain RQ2).